A 491-amino-acid polypeptide reads, in one-letter code: Cyclin-B1-5 (491 aa).

Residues 275–347 form the Cyclin N-terminal domain; that stretch reads DMYSFYKEVE…VKAVPKRELQ (73 aa).

This sequence belongs to the cyclin family. Cyclin AB subfamily. Expressed in roots, stems and flowers.

This chain is Cyclin-B1-5 (CYCB1-5), found in Arabidopsis thaliana (Mouse-ear cress).